The primary structure comprises 54 residues: Large ribosomal subunit protein bL33 (54 aa).

Belongs to the bacterial ribosomal protein bL33 family.

The polypeptide is Large ribosomal subunit protein bL33 (Parafrankia sp. (strain EAN1pec)).